Here is a 408-residue protein sequence, read N- to C-terminus: 3-ketoacyl-CoA thiolase B, peroxisomal (408 aa).

Residue Cys-112 is the Acyl-thioester intermediate of the active site. Active-site proton acceptor residues include His-366 and Cys-394.

Belongs to the thiolase-like superfamily. Thiolase family. As to quaternary structure, homodimer.

Its subcellular location is the peroxisome. It carries out the reaction an acyl-CoA + acetyl-CoA = a 3-oxoacyl-CoA + CoA. Its pathway is lipid metabolism; fatty acid metabolism. This Candida tropicalis (Yeast) protein is 3-ketoacyl-CoA thiolase B, peroxisomal.